The primary structure comprises 1343 residues: DNA-directed RNA polymerase subunit beta (1343 aa).

The protein belongs to the RNA polymerase beta chain family. As to quaternary structure, the RNAP catalytic core consists of 2 alpha, 1 beta, 1 beta' and 1 omega subunit. When a sigma factor is associated with the core the holoenzyme is formed, which can initiate transcription.

It carries out the reaction RNA(n) + a ribonucleoside 5'-triphosphate = RNA(n+1) + diphosphate. In terms of biological role, DNA-dependent RNA polymerase catalyzes the transcription of DNA into RNA using the four ribonucleoside triphosphates as substrates. The chain is DNA-directed RNA polymerase subunit beta from Shewanella sediminis (strain HAW-EB3).